The sequence spans 279 residues: Acyl-[acyl-carrier-protein]--UDP-N-acetylglucosamine O-acyltransferase (279 aa).

The segment at 256-279 is disordered; sequence IERGADKDALQDESVEKEGALVES.

This sequence belongs to the transferase hexapeptide repeat family. LpxA subfamily. Homotrimer.

The protein resides in the cytoplasm. It catalyses the reaction a (3R)-hydroxyacyl-[ACP] + UDP-N-acetyl-alpha-D-glucosamine = a UDP-3-O-[(3R)-3-hydroxyacyl]-N-acetyl-alpha-D-glucosamine + holo-[ACP]. Its pathway is glycolipid biosynthesis; lipid IV(A) biosynthesis; lipid IV(A) from (3R)-3-hydroxytetradecanoyl-[acyl-carrier-protein] and UDP-N-acetyl-alpha-D-glucosamine: step 1/6. Its function is as follows. Involved in the biosynthesis of lipid A, a phosphorylated glycolipid that anchors the lipopolysaccharide to the outer membrane of the cell. This Chlamydia caviae (strain ATCC VR-813 / DSM 19441 / 03DC25 / GPIC) (Chlamydophila caviae) protein is Acyl-[acyl-carrier-protein]--UDP-N-acetylglucosamine O-acyltransferase.